The sequence spans 232 residues: Vesicle transport through interaction with t-SNAREs homolog 1B (232 aa).

N-acetylalanine is present on Ala2. 2 interaction with CLINT1 regions span residues 2–23 (ATSAASSEHFEKLHEIFRGLHE) and 69–73 (APLSF). Residues 2-208 (ATSAASSEHF…SRKVTTNKLL (207 aa)) lie on the Cytoplasmic side of the membrane. The stretch at 35-98 (MAGTEEKKKL…AKLHREVRST (64 aa)) forms a coiled coil. At Thr103 the chain carries Phosphothreonine. Residue Arg107 is modified to Omega-N-methylarginine. Ser138 carries the phosphoserine modification. Residues 161–198 (SEIIEELGEQRDQLERTKSRLVNTSENLSKSRKILRSM) are a coiled coil. The helical; Anchor for type IV membrane protein transmembrane segment at 209–229 (LSIVILLELAILGGLVYYKFL) threads the bilayer. The Vesicular portion of the chain corresponds to 230 to 232 (RRH).

It belongs to the VTI1 family. In terms of assembly, forms a SNARE complex with STX7, STX8 and VAMP8 which functions in the homotypic fusion of late endosomes. Component of the SNARE complex composed of STX7, STX8, VAMP7 and VIT1B that is required for heterotypic fusion of late endosomes with lysosomes. May interact with STX17. Interacts with CLINT1.

Its subcellular location is the early endosome membrane. The protein resides in the late endosome membrane. The protein localises to the lysosome membrane. It localises to the cytoplasmic granule. It is found in the recycling endosome membrane. Functionally, V-SNARE that mediates vesicle transport pathways through interactions with t-SNAREs on the target membrane. These interactions are proposed to mediate aspects of the specificity of vesicle trafficking and to promote fusion of the lipid bilayers. May be concerned with increased secretion of cytokines associated with cellular senescence. This chain is Vesicle transport through interaction with t-SNAREs homolog 1B (VTI1B), found in Bos taurus (Bovine).